The following is a 356-amino-acid chain: Protein RecA (356 aa).

79–86 (GPESSGKT) is an ATP binding site.

The protein belongs to the RecA family.

Its subcellular location is the cytoplasm. Can catalyze the hydrolysis of ATP in the presence of single-stranded DNA, the ATP-dependent uptake of single-stranded DNA by duplex DNA, and the ATP-dependent hybridization of homologous single-stranded DNAs. It interacts with LexA causing its activation and leading to its autocatalytic cleavage. The polypeptide is Protein RecA (Borrelia hermsii (strain HS1 / DAH)).